A 208-amino-acid polypeptide reads, in one-letter code: Putative 3-methyladenine DNA glycosylase (208 aa).

This sequence belongs to the DNA glycosylase MPG family.

The chain is Putative 3-methyladenine DNA glycosylase from Prosthecochloris aestuarii (strain DSM 271 / SK 413).